Reading from the N-terminus, the 239-residue chain is Sugar fermentation stimulation protein homolog (239 aa).

This sequence belongs to the SfsA family.

The sequence is that of Sugar fermentation stimulation protein homolog from Rhizobium meliloti (strain 1021) (Ensifer meliloti).